Reading from the N-terminus, the 911-residue chain is DNA ligase 4 (911 aa).

Residues Glu271, Thr272, Lys273, Leu274, Arg278, Glu331, Lys345, Phe367, Glu427, Lys432, Lys449, and Lys451 each coordinate ATP. Lys273 functions as the N6-AMP-lysine intermediate in the catalytic mechanism. Glu331 provides a ligand contact to Mg(2+). Residue Glu427 coordinates Mg(2+). Residues 610–620 (LASKHLYIGGD) are required for catalytic activity. 2 consecutive BRCT domains span residues 654–743 (KISN…PRFM) and 808–911 (SPLS…QYLI).

It belongs to the ATP-dependent DNA ligase family. As to quaternary structure, interacts with XRCC4; the LIG4-XRCC4 subcomplex has a 1:2 stoichiometry and XRCC4 is required for LIG4 stability. Component of the core long-range non-homologous end joining (NHEJ) complex (also named DNA-PK complex) composed of PRKDC, LIG4, XRCC4, XRCC6/Ku70, XRCC5/Ku86 and NHEJ1/XLF. Additional component of the NHEJ complex includes PAXX. Following autophosphorylation, PRKDC dissociates from DNA, leading to formation of the short-range NHEJ complex, composed of LIG4, XRCC4, XRCC6/Ku70, XRCC5/Ku86 and NHEJ1/XLF. Interacts with DCLRE1C; the interaction is direct. Interacts with APLF. Mg(2+) serves as cofactor. Testis, thymus, prostate and heart.

The protein localises to the nucleus. The enzyme catalyses ATP + (deoxyribonucleotide)n-3'-hydroxyl + 5'-phospho-(deoxyribonucleotide)m = (deoxyribonucleotide)n+m + AMP + diphosphate.. DNA ligase involved in DNA non-homologous end joining (NHEJ); required for double-strand break (DSB) repair and V(D)J recombination. Catalyzes the NHEJ ligation step of the broken DNA during DSB repair by resealing the DNA breaks after the gap filling is completed. Joins single-strand breaks in a double-stranded polydeoxynucleotide in an ATP-dependent reaction. LIG4 is mechanistically flexible: it can ligate nicks as well as compatible DNA overhangs alone, while in the presence of XRCC4, it can ligate ends with 2-nucleotides (nt) microhomology and 1-nt gaps. Forms a subcomplex with XRCC4; the LIG4-XRCC4 subcomplex is responsible for the NHEJ ligation step and XRCC4 enhances the joining activity of LIG4. Binding of the LIG4-XRCC4 complex to DNA ends is dependent on the assembly of the DNA-dependent protein kinase complex DNA-PK to these DNA ends. LIG4 regulates nuclear localization of XRCC4. This chain is DNA ligase 4, found in Homo sapiens (Human).